A 175-amino-acid polypeptide reads, in one-letter code: MDLNTINSMSYEQFLDTFGNIIERCPLVTAAIWSQQPFASVTELENRVFDFIESLPLAGKEGILRCHPDLAGRDLMRGTLTDESQNEQAQAGLTLLSAKEKETLGFLNLQYKAKFGFPFVICAKMSDKNKIMQELGSRLQNEQSEELQKGIAEVKKICHLRICDLFLNEKLPTKL.

Residue His-67 is the Proton donor of the active site. Substrate is bound by residues Pro-68, Ser-84 to Gln-88, and Phe-119 to Ala-123. Positions Thr-173 to Leu-175 match the Microbody targeting signal motif.

This sequence belongs to the OHCU decarboxylase family.

The protein resides in the peroxisome. The enzyme catalyses 5-hydroxy-2-oxo-4-ureido-2,5-dihydro-1H-imidazole-5-carboxylate + H(+) = (S)-allantoin + CO2. The protein operates within purine metabolism; urate degradation; (S)-allantoin from urate: step 3/3. Its function is as follows. Catalyzes the stereoselective decarboxylation of 2-oxo-4-hydroxy-4-carboxy-5-ureidoimidazoline (OHCU) to (S)-allantoin. In Xenopus laevis (African clawed frog), this protein is 2-oxo-4-hydroxy-4-carboxy-5-ureidoimidazoline decarboxylase (urad).